The following is a 273-amino-acid chain: Thymidylate synthase (273 aa).

Residue Arg-31 participates in dUMP binding. His-61 is a (6R)-5,10-methylene-5,6,7,8-tetrahydrofolate binding site. 136-137 (RR) is a binding site for dUMP. Cys-156 acts as the Nucleophile in catalysis. Residues 176-179 (RSAD), Asn-187, and 217-219 (HIY) contribute to the dUMP site. Asp-179 serves as a coordination point for (6R)-5,10-methylene-5,6,7,8-tetrahydrofolate. Ala-272 contacts (6R)-5,10-methylene-5,6,7,8-tetrahydrofolate.

It belongs to the thymidylate synthase family. Bacterial-type ThyA subfamily. In terms of assembly, homodimer.

The protein resides in the cytoplasm. It catalyses the reaction dUMP + (6R)-5,10-methylene-5,6,7,8-tetrahydrofolate = 7,8-dihydrofolate + dTMP. It functions in the pathway pyrimidine metabolism; dTTP biosynthesis. Its function is as follows. Catalyzes the reductive methylation of 2'-deoxyuridine-5'-monophosphate (dUMP) to 2'-deoxythymidine-5'-monophosphate (dTMP) while utilizing 5,10-methylenetetrahydrofolate (mTHF) as the methyl donor and reductant in the reaction, yielding dihydrofolate (DHF) as a by-product. This enzymatic reaction provides an intracellular de novo source of dTMP, an essential precursor for DNA biosynthesis. The polypeptide is Thymidylate synthase (Corynebacterium jeikeium (strain K411)).